The sequence spans 198 residues: Glycerol-3-phosphate acyltransferase (198 aa).

The next 5 helical transmembrane spans lie at methionine 1–phenylalanine 21, histidine 77–leucine 97, methionine 111–leucine 131, isoleucine 136–isoleucine 156, and glycine 157–lysine 177.

It belongs to the PlsY family. As to quaternary structure, probably interacts with PlsX.

It localises to the cell inner membrane. It catalyses the reaction an acyl phosphate + sn-glycerol 3-phosphate = a 1-acyl-sn-glycero-3-phosphate + phosphate. The protein operates within lipid metabolism; phospholipid metabolism. In terms of biological role, catalyzes the transfer of an acyl group from acyl-phosphate (acyl-PO(4)) to glycerol-3-phosphate (G3P) to form lysophosphatidic acid (LPA). This enzyme utilizes acyl-phosphate as fatty acyl donor, but not acyl-CoA or acyl-ACP. The protein is Glycerol-3-phosphate acyltransferase of Prochlorococcus marinus (strain MIT 9515).